A 75-amino-acid chain; its full sequence is MRQKIFFLKRFDSELLYVQGSILKSFQRFSLTLSVSTNNSKYLDFFRTGPSQIATIRSTSFYTISETQGLNRMDM.

The protein resides in the plastid. It is found in the chloroplast. This is an uncharacterized protein from Calycanthus floridus var. glaucus (Eastern sweetshrub).